A 728-amino-acid chain; its full sequence is 1,4-alpha-glucan branching enzyme GlgB (728 aa).

Residue aspartate 405 is the Nucleophile of the active site. Glutamate 458 acts as the Proton donor in catalysis.

It belongs to the glycosyl hydrolase 13 family. GlgB subfamily. As to quaternary structure, monomer.

It carries out the reaction Transfers a segment of a (1-&gt;4)-alpha-D-glucan chain to a primary hydroxy group in a similar glucan chain.. The protein operates within glycan biosynthesis; glycogen biosynthesis. Catalyzes the formation of the alpha-1,6-glucosidic linkages in glycogen by scission of a 1,4-alpha-linked oligosaccharide from growing alpha-1,4-glucan chains and the subsequent attachment of the oligosaccharide to the alpha-1,6 position. This is 1,4-alpha-glucan branching enzyme GlgB from Citrobacter koseri (strain ATCC BAA-895 / CDC 4225-83 / SGSC4696).